Reading from the N-terminus, the 399-residue chain is Phosphate acyltransferase (399 aa).

The protein belongs to the PlsX family. As to quaternary structure, homodimer. Probably interacts with PlsY.

It localises to the cytoplasm. The catalysed reaction is a fatty acyl-[ACP] + phosphate = an acyl phosphate + holo-[ACP]. It functions in the pathway lipid metabolism; phospholipid metabolism. In terms of biological role, catalyzes the reversible formation of acyl-phosphate (acyl-PO(4)) from acyl-[acyl-carrier-protein] (acyl-ACP). This enzyme utilizes acyl-ACP as fatty acyl donor, but not acyl-CoA. This is Phosphate acyltransferase from Rhodobacter capsulatus (Rhodopseudomonas capsulata).